The following is a 214-amino-acid chain: Adenylate kinase (214 aa).

10–15 is an ATP binding site; it reads GAGKGT. Residues 30 to 59 form an NMP region; the sequence is STGDMLRAAVKAGTPLGLEAKKVMDAGQLV. Residues Thr31, Arg36, 57 to 59, 85 to 88, and Gln92 contribute to the AMP site; these read QLV and GFPR. The segment at 122–159 is LID; the sequence is GRRVHPGSGRVYHVVFNPPKVEGKDDVTGEDLAIRPDD. ATP-binding positions include Arg123 and 132–133; that span reads VY. Residues Arg156 and Arg167 each contribute to the AMP site. Gln200 provides a ligand contact to ATP.

This sequence belongs to the adenylate kinase family. Monomer.

The protein localises to the cytoplasm. It catalyses the reaction AMP + ATP = 2 ADP. It functions in the pathway purine metabolism; AMP biosynthesis via salvage pathway; AMP from ADP: step 1/1. Functionally, catalyzes the reversible transfer of the terminal phosphate group between ATP and AMP. Plays an important role in cellular energy homeostasis and in adenine nucleotide metabolism. This chain is Adenylate kinase, found in Shewanella putrefaciens (strain CN-32 / ATCC BAA-453).